The primary structure comprises 101 residues: Eukaryotic translation initiation factor 4E-binding protein 3 (101 aa).

Residues 1 to 28 (MSSSTSCPIPGCRDQLPDGYSTTPGGTL) form a disordered region. Residues 40–46 (YDRKFLL) carry the YXXXXLphi motif motif. The TOS motif signature appears at 97–101 (FEMDM).

It belongs to the eIF4E-binding protein family. In terms of assembly, interacts with EIF4E. Interacts with RPA2 (via N-terminus); the interaction enhances EIF4EBP3-mediated inhibition of EIF4E-mediated mRNA nuclear export. In terms of processing, phosphorylated.

Its subcellular location is the cytoplasm. It localises to the nucleus. Repressor of translation initiation that regulates EIF4E activity by preventing its assembly into the eIF4F complex: the hypophosphorylated form competes with EIF4G1/EIF4G3 and strongly binds to EIF4E, leading to repression of translation. In contrast, the hyperphosphorylated form dissociates from EIF4E, allowing interaction between EIF4G1/EIF4G3 and EIF4E, leading to initiation of translation. Inhibits EIF4E-mediated mRNA nuclear export. The polypeptide is Eukaryotic translation initiation factor 4E-binding protein 3 (Eif4ebp3) (Mus musculus (Mouse)).